Here is a 341-residue protein sequence, read N- to C-terminus: MTKIDFENIKILQDKIKDIEIEKNVYDERNIFLKNYLSPLYKELKEMSEEDKKEFGKQLNQYKEMIEDVAEKRINEIKKQKILNIKSEYDINLPADYFQSGGINPIDLVKNEIVKFFKKANFKILTESEVTSVEFNFDSLNIKKDHPARSISDTFYIDDKQLLRVHNTAITSKALRMFNKEEEIKVLSHGNVYRKDDDDATHSHQFNQIDMVWVKKGMSLANLKWLTDKLLKYLFNESIKIRYRISHFPFTEPSFEVDINCFFCDSKDHCSVCKNTKWIEVLGAGLLHPNVLKNANVKKGLSGIAFGIGIDRIAMLKYQIKDIRRLYGNDFSLIESFKGER.

E252 contacts Mg(2+).

It belongs to the class-II aminoacyl-tRNA synthetase family. Phe-tRNA synthetase alpha subunit type 1 subfamily. Tetramer of two alpha and two beta subunits. Requires Mg(2+) as cofactor.

The protein localises to the cytoplasm. It catalyses the reaction tRNA(Phe) + L-phenylalanine + ATP = L-phenylalanyl-tRNA(Phe) + AMP + diphosphate + H(+). The protein is Phenylalanine--tRNA ligase alpha subunit of Malacoplasma penetrans (strain HF-2) (Mycoplasma penetrans).